Reading from the N-terminus, the 953-residue chain is Coatomer subunit beta (953 aa).

Thr-2 bears the N-acetylthreonine mark. HEAT repeat units follow at residues 96-131, 132-168, 240-276, 277-314, 316-353, and 396-433; these read HEMI…KEAE, LLEP…NFEH, SERA…SAPT, AIKA…HPAH, RVLQ…SRNV, and DMAA…RFDN. N6-acetyllysine is present on Lys-494.

In terms of assembly, oligomeric complex that consists of at least the alpha, beta, beta', gamma, delta, epsilon and zeta subunits. Interacts with SCYL1. Interacts with COPG1. Interacts (via trunk domain) with ARF1 (via switch I region); the interaction is direct. Interacts with KCNK2/TREK (via N-terminus); this interaction increases the channel-mediated whole cell currents and promotes plasma membrane expression of KCNK2/TREK. Interacts with anthrax lethal factor (LF); this interaction may facilitate endosomal vesicle membrane translocation of LF and its release from the lumen of endosomal vesicles to external milieu. Interacts with CAPN8 and PRKCE. Interacts with ARF1 (myristoylated); this interaction is required for binding of COPB1 to Golgi membranes. Interacts with STX17. Interacts with TMEM115. Interacts with HLA-G-B2M complex; this interaction mediates the endoplasmic reticulum (ER) retrieval of HLA-E-B2M complexes that bind low affinity peptides. Interacts with TMEM41B. (Microbial infection) Interacts (via C-terminus) with HIV-1 Nef; the interaction is direct. In terms of processing, proteolytically cleaved between Ser-528 and Ser-529 by CAPN8.

The protein resides in the cytoplasm. Its subcellular location is the golgi apparatus membrane. It is found in the cytoplasmic vesicle. It localises to the COPI-coated vesicle membrane. The protein localises to the cell membrane. The protein resides in the endoplasmic reticulum-Golgi intermediate compartment. Functionally, the coatomer is a cytosolic protein complex that binds to dilysine motifs and reversibly associates with Golgi non-clathrin-coated vesicles, which further mediate biosynthetic protein transport from the ER, via the Golgi up to the trans Golgi network. Coatomer complex is required for budding from Golgi membranes, and is essential for the retrograde Golgi-to-ER transport of dilysine-tagged proteins. In mammals, the coatomer can only be recruited by membranes associated to ADP-ribosylation factors (ARFs), which are small GTP-binding proteins; the complex also influences the Golgi structural integrity, as well as the processing, activity, and endocytic recycling of LDL receptors. Plays a functional role in facilitating the transport of kappa-type opioid receptor mRNAs into axons and enhances translation of these proteins. Required for limiting lipid storage in lipid droplets. Involved in lipid homeostasis by regulating the presence of perilipin family members PLIN2 and PLIN3 at the lipid droplet surface and promoting the association of adipocyte surface triglyceride lipase (PNPLA2) with the lipid droplet to mediate lipolysis. Involved in the Golgi disassembly and reassembly processes during cell cycle. Involved in autophagy by playing a role in early endosome function. Plays a role in organellar compartmentalization of secretory compartments including endoplasmic reticulum (ER)-Golgi intermediate compartment (ERGIC), Golgi, trans-Golgi network (TGN) and recycling endosomes, and in biosynthetic transport of CAV1. Promotes degradation of Nef cellular targets CD4 and MHC class I antigens by facilitating their trafficking to degradative compartments. The chain is Coatomer subunit beta from Homo sapiens (Human).